The following is a 429-amino-acid chain: Adenylosuccinate synthetase (429 aa).

Residues 12–18 and 40–42 each bind GTP; these read GDEGKGK and GHT. Aspartate 13 functions as the Proton acceptor in the catalytic mechanism. Residues aspartate 13 and glycine 40 each coordinate Mg(2+). IMP is bound by residues 13–16, 38–41, threonine 129, arginine 143, glutamine 224, threonine 239, and arginine 303; these read DEGK and NAGH. Histidine 41 serves as the catalytic Proton donor. 299–305 contributes to the substrate binding site; that stretch reads VTTGRAR. Residues arginine 305, 331–333, and 413–415 each bind GTP; these read KLD and GVG.

Belongs to the adenylosuccinate synthetase family. In terms of assembly, homodimer. Requires Mg(2+) as cofactor.

It localises to the cytoplasm. It carries out the reaction IMP + L-aspartate + GTP = N(6)-(1,2-dicarboxyethyl)-AMP + GDP + phosphate + 2 H(+). The protein operates within purine metabolism; AMP biosynthesis via de novo pathway; AMP from IMP: step 1/2. In terms of biological role, plays an important role in the de novo pathway of purine nucleotide biosynthesis. Catalyzes the first committed step in the biosynthesis of AMP from IMP. This chain is Adenylosuccinate synthetase, found in Rhodococcus erythropolis (strain PR4 / NBRC 100887).